The primary structure comprises 561 residues: MVSKRKSRTSKTIEDSCIHLCSVFFRFLYYTLPALFLFFFLLYLCLSFTTGISYNNFHMCIFSRKFNDPYCNTAGSKPGFQIISEENVTFAGEIAGDRVSKDHNKILNSVPVQEHKTKNKVDLNSLIELKAEEEYSKYIKPTSEDEGYALRAAIKYLYLQRSWLSPGDENLNKPRSCEGKGVYVYDLPSKFNSDLLVGCNDILPGVNLCSYFKNEGFGEAIKNLGKGWFATHMYSLEPILHSRVLKHPCRVYNETQAKLFFVPYYGGYDVLRWHYRNVSEDVKDRLGIEVLKWLNSKESWRRNAGKDHVFVLGKITWDFRRDKDPWGSRFLELQEMQNPTKLLIERQPWQVNDIAIPHPTYFHPRTDDDITRWQIKIMSKLRRNLVSFAGGARPDNPNNIRSTLIEQCISSNQCRFLNCTNESCTNPKNVLDLFQDSEFCLQPPGDSATRRSVFDSLISGCIPVIFTPYTAYYQYAWHLPEDHRKYSVYISEQDVKEKRVNVVEILKAKTLKEKKDMKSYIVQQLLPGLVYGDSNAKFEKFRDAFDITFDCLLKKINRSVV.

Over 1–31 (MVSKRKSRTSKTIEDSCIHLCSVFFRFLYYT) the chain is Cytoplasmic. A helical; Signal-anchor for type II membrane protein membrane pass occupies residues 32–52 (LPALFLFFFLLYLCLSFTTGI). Topologically, residues 53–561 (SYNNFHMCIF…LLKKINRSVV (509 aa)) are lumenal. 6 N-linked (GlcNAc...) asparagine glycosylation sites follow: asparagine 87, asparagine 253, asparagine 277, asparagine 418, asparagine 421, and asparagine 557.

The protein belongs to the glycosyltransferase 47 family. In terms of tissue distribution, expressed in hydathodes.

Its subcellular location is the golgi apparatus membrane. Functionally, functions in xyloglucan synthesis by adding side chains to the xylosylated glucan backbone. Involved in the galactosylation of hemicellulose xyloglucan. The protein is Probable xyloglucan galactosyltransferase GT20 of Arabidopsis thaliana (Mouse-ear cress).